The following is a 233-amino-acid chain: MVQQIWETLKETITAYTGLSPAAFFTVLALAFAVYQVVSGFFVSPEVHRPRSLEVQPQSEPLPPPVQLGEITEEELKLYDGSDSKKPLLMAIKGQIYDVSQSRMFYGPGGPYALFAGKDASRALAKMSFEDQDLTGDISGLGAFELEALQDWEYKFMSKYVKVGTIQKKDGEGKESSEPSEAKTASAEGLSTNTGEEASAITHDETSRSTGEKIAETTEKKDVATDDDDAAKE.

The chain crosses the membrane as a helical span at residues 23–43 (AFFTVLALAFAVYQVVSGFFV). The Cytochrome b5 heme-binding domain occupies 70–167 (EITEEELKLY…SKYVKVGTIQ (98 aa)). The interval 70 to 167 (EITEEELKLY…SKYVKVGTIQ (98 aa)) is steroid-binding. 2 stretches are compositionally biased toward basic and acidic residues: residues 169 to 181 (KDGE…EPSE) and 202 to 224 (THDE…KDVA). The disordered stretch occupies residues 169–233 (KDGEGKESSE…ATDDDDAAKE (65 aa)). Position 225 is a phosphothreonine (Thr225).

Belongs to the cytochrome b5 family. MAPR subfamily.

The protein localises to the cell membrane. The polypeptide is Membrane steroid-binding protein 2 (MSBP2) (Arabidopsis thaliana (Mouse-ear cress)).